The primary structure comprises 211 residues: Endo-1,4-beta-xylanase 5 (211 aa).

Residues 1–16 (MKVTAAFASLLLTAFA) form the signal peptide. Positions 19–210 (APEPVLVSRS…GVGSASVTIS (192 aa)) constitute a GH11 domain. Glu106 functions as the Nucleophile in the catalytic mechanism. Glu197 serves as the catalytic Proton donor.

The protein belongs to the glycosyl hydrolase 11 (cellulase G) family.

Its subcellular location is the secreted. The catalysed reaction is Endohydrolysis of (1-&gt;4)-beta-D-xylosidic linkages in xylans.. The protein operates within glycan degradation; xylan degradation. In terms of biological role, endo-1,4-beta-xylanase involved in the hydrolysis of xylan, a major structural heterogeneous polysaccharide found in plant biomass representing the second most abundant polysaccharide in the biosphere, after cellulose. This is Endo-1,4-beta-xylanase 5 (XYN5) from Aspergillus niger.